The chain runs to 371 residues: MKTTPNEKLLKKALHSCNNKKYADKILHQEKEIFDLKQLLQISKSLNSVLEFDRLIEAILYIVMAQLKTLGAAIFTKKSFDDNLFVLNRDHYGFDIIRDAQYSINVDHPLINFLDKSDSGCTPDEISKNIKTDKIVKDLFSLSPSFFVPLKAKNRMIGFLLLGEKMESSHQFTDYEKNIIENIASLAAIAINNSQLLEMTTTDIMTHLKLKHYFFTLLMEHLYTINSSGEKKETLSILMIDIDFFKNINDTYGHAAGDIVLEEVAKIIKSCTRNADTAARYGGEEFIVMLNNTSASAAMAVAERIRKSVEEKSIMYDGKKINVTISIGVSSYNFDLESAKSIVERADKALYESKQNGRNRVTLSKNNLPKA.

The region spanning 233–366 (ETLSILMIDI…GRNRVTLSKN (134 aa)) is the GGDEF domain. Positions 241, 242, and 284 each coordinate Mg(2+). The Proton acceptor role is filled by E284.

Exists as a homodimer and as larger aggregates. Both dimers and aggregates possess DGC activity. Mg(2+) serves as cofactor. Requires Mn(2+) as cofactor.

The protein resides in the cytoplasm. It carries out the reaction 2 GTP = 3',3'-c-di-GMP + 2 diphosphate. Its activity is regulated as follows. Allosterically regulated by a feedback inhibition loop. Its function is as follows. Catalyzes the conversion of GTP to cyclic-di-GMP (c-di-GMP). Shows activity under aerobic and anaerobic reaction conditions. This Treponema denticola (strain ATCC 35405 / DSM 14222 / CIP 103919 / JCM 8153 / KCTC 15104) protein is Diguanylate cyclase A.